The sequence spans 316 residues: Acetaldehyde dehydrogenase 1 (316 aa).

Position 12 to 15 (12 to 15 (SGNI)) interacts with NAD(+). Cys132 serves as the catalytic Acyl-thioester intermediate. Residues 163 to 171 (SAGPGTRAN) and Asn291 contribute to the NAD(+) site.

The protein belongs to the acetaldehyde dehydrogenase family.

The enzyme catalyses acetaldehyde + NAD(+) + CoA = acetyl-CoA + NADH + H(+). The chain is Acetaldehyde dehydrogenase 1 from Pseudomonas putida (strain ATCC 700007 / DSM 6899 / JCM 31910 / BCRC 17059 / LMG 24140 / F1).